The chain runs to 327 residues: Mitochondrial carnitine carrier (327 aa).

The span at 1 to 11 (MSSDTSLSESS) shows a compositional bias: low complexity. The interval 1 to 29 (MSSDTSLSESSLLKEESGSLTKSRPPIKS) is disordered. Helical transmembrane passes span 33–49 (RENI…GVCA), 107–123 (LGVT…YDVG), 141–162 (MGQM…TAPT), 196–212 (GSLA…ALYF), 244–260 (LAGG…VFPI), and 293–313 (FFPG…ATFL). Solcar repeat units follow at residues 33-126 (RENI…GKKL), 139-221 (LTMG…SKNY), and 237-321 (VNIL…THSL).

The protein belongs to the mitochondrial carrier (TC 2.A.29) family.

The protein resides in the mitochondrion inner membrane. Transports carnitine, acetylcarnitine, propionylcarnitine and to a much lower extent medium- and long-chain acylcarnitines. This Saccharomyces cerevisiae (strain ATCC 204508 / S288c) (Baker's yeast) protein is Mitochondrial carnitine carrier (CRC1).